A 313-amino-acid polypeptide reads, in one-letter code: Putative olfactory receptor 2B3 (313 aa).

Over methionine 1–methionine 25 the chain is Extracellular. Residue asparagine 5 is glycosylated (N-linked (GlcNAc...) asparagine). Residues proline 26 to cysteine 49 traverse the membrane as a helical segment. Residues isoleucine 50–threonine 57 lie on the Cytoplasmic side of the membrane. The helical transmembrane segment at proline 58 to proline 79 threads the bilayer. Residues histidine 80–histidine 100 are Extracellular-facing. Cysteine 97 and cysteine 189 form a disulfide bridge. A helical membrane pass occupies residues leucine 101–phenylalanine 120. Residues aspartate 121–tryptophan 139 are Cytoplasmic-facing. The helical transmembrane segment at phenylalanine 140–leucine 158 threads the bilayer. The Extracellular segment spans residues glutamine 159 to isoleucine 195. Residues glutamate 196 to glycine 219 traverse the membrane as a helical segment. Residues phenylalanine 220–lysine 236 are Cytoplasmic-facing. Residues alanine 237–tyrosine 259 form a helical membrane-spanning segment. Topologically, residues leucine 260–lysine 272 are extracellular. A helical transmembrane segment spans residues methionine 273–leucine 292. Over arginine 293–lysine 313 the chain is Cytoplasmic.

Belongs to the G-protein coupled receptor 1 family.

Its subcellular location is the cell membrane. Functionally, odorant receptor. This chain is Putative olfactory receptor 2B3 (OR2B3), found in Homo sapiens (Human).